Here is a 284-residue protein sequence, read N- to C-terminus: uncharacterized protein (284 aa).

The N-terminal stretch at 1-23 (MKRGCAIAVMICGLITSVSAASA) is a signal peptide.

This sequence belongs to the surface antigen msp4 family.

This is an uncharacterized protein from Brucella abortus (strain 2308).